We begin with the raw amino-acid sequence, 90 residues long: MSNNLLLPDKNSRMQREQWKWTRMTLTRAHYKQDNKQCQHWRINSQTTREEWQMLCPGRKWILNLLTRLGLNLMIISRRDQALDMEMSLM.

This sequence belongs to the hantavirus NS-S protein family.

It localises to the host cytoplasm. Its subcellular location is the host perinuclear region. In terms of biological role, antagonizes host type-I IFN signaling pathway. The sequence is that of Non-structural protein NS-S (N) from Homo sapiens (Human).